The chain runs to 416 residues: Cyclin-L1-1 (416 aa).

Residues 286 to 416 form a disordered region; sequence KCTAGSANND…DSSKDRRRHH (131 aa). Basic and acidic residues-rich tracts occupy residues 304–315, 328–374, 384–393, and 401–410; these read PHEKATDSKKSG, SYER…DKLK, RLKDSGGHSD, and RDRDYRDSSK.

This sequence belongs to the cyclin family. Cyclin L subfamily. As to quaternary structure, forms a complex with CDKG1. Interacts with MOS4 and associates with the spliceosome.

It is found in the nucleus. Its function is as follows. Cognate cyclin for CDKG1. Required for synapsis and male meiosis, and for the proper splicing of specific resistance (R) genes. Involved in regulation of DNA methylation and transcriptional silencing. The chain is Cyclin-L1-1 (CYCL1-1) from Arabidopsis thaliana (Mouse-ear cress).